The sequence spans 514 residues: MARAVHRSGLVALGIATALMASCAFAAKDVVVAVGSNFTTLDPYDANDTLSQAVAKSFYQGLFGLDKEMKLKNVLAESYTVSDDGITYTVKLREGIKFQDGTDFNAVAVKANLDRASDPANHLKRYNLYKNIAKTEAIDPTTVKITLKQPFSAFINILVHPATAMISPTALEKYGKEIGFHPVGTGPYELDTWNQTDFVKVKKFAGYWQPGLPKLDSITWRPVADNNTRAAMLQTGEAQFAFPIPYEQATLLEKNKNIELMASPSIMQRYISMNVTQKPFDNPKVREALNYAINRPALVKVAFAGYATPATGVVPPSIAIAYAQSYKPWPYDPVKARELLKEAGYPNGFSTTLWSSHNHSTAQKVLQFTQQQLAQVGIKAQVTAMDAGQRAAEVEGKGQKESGVRMFYTGWSASTGEADWALSPLFASQNWPPTLFNTAFYSNKQVDDFLAQALKTNDPAEKTRLYKAAQDIIWQESPWIPLVVEKLVSAHSKNLTGFWIMPDTGFSFEDADLQ.

The signal sequence occupies residues 1–26 (MARAVHRSGLVALGIATALMASCAFA).

This sequence belongs to the bacterial solute-binding protein 5 family. The complex is composed of two ATP-binding proteins (GsiA), two transmembrane proteins (GsiC and GsiD) and a solute-binding protein (GsiB).

Its subcellular location is the periplasm. In terms of biological role, part of the ABC transporter complex GsiABCD involved in glutathione import. Binds glutathione. The polypeptide is Glutathione-binding protein GsiB (Shigella flexneri serotype 5b (strain 8401)).